The following is a 1406-amino-acid chain: Receptor-type tyrosine-protein phosphatase eta (1406 aa).

Positions 1–24 (MRRLPLLPPCPLLLLLLLPAEVRC) are cleaved as a signal peptide. The Extracellular portion of the chain corresponds to 25–1044 (TTACTDDCSL…LPQDPGVIAG (1020 aa)). Residues Asn36, Asn52, Asn97, Asn103, Asn118, Asn124, Asn186, Asn192, Asn243, Asn275, Asn281, Asn296, Asn302, Asn331, Asn332, Asn364, Asn385, Asn391, Asn453, Asn459, Asn484, Asn500, Asn510, Asn547, Asn568, Asn630, Asn636, Asn651, Asn657, Asn719, Asn745, Asn750, Asn766, Asn776, Asn804, and Asn828 are each glycosylated (N-linked (GlcNAc...) asparagine). The segment at 39 to 72 (EEMGTSSNDELSVNATSGNRRLSEDVSLPGRAMS) is disordered. A compositionally biased stretch (polar residues) spans 41 to 58 (MGTSSNDELSVNATSGNR). 10 Fibronectin type-III domains span residues 82–170 (AVLD…TKPS), 171–259 (PVLD…TKPS), 260–343 (PVLD…SLNL), 346–437 (KPSP…TKPS), 438–523 (PVLD…SLYT), 524–614 (KPTP…TKPR), 615–703 (AVLH…TKPS), 704–793 (MVLN…VPSS), 794–888 (VNAF…TDPP), and 887–979 (PPVP…IVDV). N-linked (GlcNAc...) asparagine glycosylation occurs at Asn1010. A helical membrane pass occupies residues 1045–1065 (AVIGCLLAILAVVAIGGYIFW). Residues 1066–1406 (RRRRKDKRNT…AFGKANGYHA (341 aa)) lie on the Cytoplasmic side of the membrane. In terms of domain architecture, Tyrosine-protein phosphatase spans 1110 to 1367 (FAEEYEELKS…VFLNQCVMDI (258 aa)). Substrate contacts are provided by residues Asp1274, 1308 to 1314 (CSAGVGR), and Gln1352. The active-site Phosphocysteine intermediate is the Cys1308.

The protein belongs to the protein-tyrosine phosphatase family. Receptor class 3 subfamily. As to expression, found on the apical surfaces of retinal Mueller cells, renal tubule cells and intestinal brush border cells.

It localises to the cell membrane. It is found in the cell projection. Its subcellular location is the ruffle membrane. The protein localises to the cell junction. The catalysed reaction is O-phospho-L-tyrosyl-[protein] + H2O = L-tyrosyl-[protein] + phosphate. In terms of biological role, tyrosine phosphatase which dephosphorylates or contributes to the dephosphorylation of several substrates. Plays a role in cell adhesion, migration, proliferation and differentiation. Has a role in megakaryocytes and platelet formation. May influence the potential of nonsensory supporting cells to either proliferate or differentiate into hair cells. The chain is Receptor-type tyrosine-protein phosphatase eta (PTPRJ) from Gallus gallus (Chicken).